A 323-amino-acid chain; its full sequence is Methionyl-tRNA formyltransferase (323 aa).

A (6S)-5,6,7,8-tetrahydrofolate-binding site is contributed by 118–121; that stretch reads SLLP.

This sequence belongs to the Fmt family.

It catalyses the reaction L-methionyl-tRNA(fMet) + (6R)-10-formyltetrahydrofolate = N-formyl-L-methionyl-tRNA(fMet) + (6S)-5,6,7,8-tetrahydrofolate + H(+). Its function is as follows. Attaches a formyl group to the free amino group of methionyl-tRNA(fMet). The formyl group appears to play a dual role in the initiator identity of N-formylmethionyl-tRNA by promoting its recognition by IF2 and preventing the misappropriation of this tRNA by the elongation apparatus. The sequence is that of Methionyl-tRNA formyltransferase from Buchnera aphidicola subsp. Baizongia pistaciae (strain Bp).